A 942-amino-acid chain; its full sequence is Leucine--tRNA ligase 2 (942 aa).

The 'HIGH' region signature appears at 35 to 45 (PYPNSPFHLGH). Positions 619–623 (KMSKS) match the 'KMSKS' region motif. Position 622 (Lys622) interacts with ATP.

This sequence belongs to the class-I aminoacyl-tRNA synthetase family.

Its subcellular location is the cytoplasm. The enzyme catalyses tRNA(Leu) + L-leucine + ATP = L-leucyl-tRNA(Leu) + AMP + diphosphate. This is Leucine--tRNA ligase 2 from Sulfolobus acidocaldarius (strain ATCC 33909 / DSM 639 / JCM 8929 / NBRC 15157 / NCIMB 11770).